The sequence spans 668 residues: Potassium-transporting ATPase ATP-binding subunit (668 aa).

4 consecutive transmembrane segments (helical) span residues 31–51, 62–82, 213–233, and 243–263; these read MFLT…PSFF, FYVA…ISTA, TVFL…IFAI, and IVML…ALLP. Aspartate 298 serves as the catalytic 4-aspartylphosphate intermediate. ATP-binding positions include aspartate 335, glutamate 339, 367–374, and lysine 385; that span reads FSSETKFS. Mg(2+) contacts are provided by aspartate 504 and aspartate 508. A run of 3 helical transmembrane segments spans residues 573–593, 599–619, and 644–664; these read YFVI…VNIL, IVAV…LIPL, and IGGV…LIAW.

Belongs to the cation transport ATPase (P-type) (TC 3.A.3) family. Type IA subfamily. In terms of assembly, the system is composed of three essential subunits: KdpA, KdpB and KdpC.

It is found in the cell membrane. It catalyses the reaction K(+)(out) + ATP + H2O = K(+)(in) + ADP + phosphate + H(+). Part of the high-affinity ATP-driven potassium transport (or Kdp) system, which catalyzes the hydrolysis of ATP coupled with the electrogenic transport of potassium into the cytoplasm. This subunit is responsible for energy coupling to the transport system and for the release of the potassium ions to the cytoplasm. In Thermoplasma volcanium (strain ATCC 51530 / DSM 4299 / JCM 9571 / NBRC 15438 / GSS1), this protein is Potassium-transporting ATPase ATP-binding subunit.